We begin with the raw amino-acid sequence, 717 residues long: Fatty acid oxidation complex subunit alpha (717 aa).

The tract at residues 1 to 190 (MESTSAFNLQ…KAGLVDDVVP (190 aa)) is enoyl-CoA hydratase. The interval 306–717 (RALHSVGVLG…AGNLQAEMTV (412 aa)) is 3-hydroxyacyl-CoA dehydrogenase.

It in the N-terminal section; belongs to the enoyl-CoA hydratase/isomerase family. The protein in the central section; belongs to the 3-hydroxyacyl-CoA dehydrogenase family. As to quaternary structure, heterotetramer of two alpha chains (FadJ) and two beta chains (FadI).

It is found in the cytoplasm. It catalyses the reaction a (3S)-3-hydroxyacyl-CoA = a (2E)-enoyl-CoA + H2O. The enzyme catalyses a 4-saturated-(3S)-3-hydroxyacyl-CoA = a (3E)-enoyl-CoA + H2O. The catalysed reaction is a (3S)-3-hydroxyacyl-CoA + NAD(+) = a 3-oxoacyl-CoA + NADH + H(+). It carries out the reaction (3S)-3-hydroxybutanoyl-CoA = (3R)-3-hydroxybutanoyl-CoA. It functions in the pathway lipid metabolism; fatty acid beta-oxidation. Catalyzes the formation of a hydroxyacyl-CoA by addition of water on enoyl-CoA. Also exhibits 3-hydroxyacyl-CoA epimerase and 3-hydroxyacyl-CoA dehydrogenase activities. The protein is Fatty acid oxidation complex subunit alpha of Cronobacter sakazakii (strain ATCC BAA-894) (Enterobacter sakazakii).